The sequence spans 162 residues: Scytalone dehydratase-like protein claB (162 aa).

A substrate-binding site is contributed by Tyr-48. Catalysis depends on residues His-83 and His-108.

This sequence belongs to the scytalone dehydratase family.

The protein operates within pigment biosynthesis. Scytalone dehydratase-like protein; part of the gene cluster that mediates the biosynthesis of the bianthraquinone cladofulvin, a conidial pigment not required for virulence but that plays a role in fitness and resistance to environmental stresses including UV light and low-temperature stress. The pathway begins with the synthesis of atrochrysone thioester by the polyketide synthase (PKS) claG. The atrochrysone carboxyl ACP thioesterase claF then breaks the thioester bond and releases the atrochrysone carboxylic acid from claG. This compound is decarboxylated by claH to yield emodin, which is further converted to chrysophanol hydroquinone by the reductase claC and the dehydratase claB. The cytochrome P450 monooxygenase claM then catalyzes the dimerization of nataloe-emodin to cladofulvin. This Passalora fulva (Tomato leaf mold) protein is Scytalone dehydratase-like protein claB.